We begin with the raw amino-acid sequence, 72 residues long: Alpha-mammal toxin Bot3 (72 aa).

Residues 1 to 8 (LVMAGVES) form the signal peptide. An LCN-type CS-alpha/beta domain is found at 10–72 (KDGYIVDDRN…VRTKGPGRCN (63 aa)). 4 disulfides stabilise this stretch: Cys-20–Cys-71, Cys-24–Cys-44, Cys-30–Cys-54, and Cys-34–Cys-56. Asparagine amide is present on Asn-72.

The protein belongs to the long (4 C-C) scorpion toxin superfamily. Sodium channel inhibitor family. Alpha subfamily. In terms of processing, when the toxin is not amidated, there are 75% loss of toxicity to mice, and total incapacity to bind rat brain synaptosomes. Expressed by the venom gland.

Its subcellular location is the secreted. Alpha toxins bind voltage-independently at site-3 of sodium channels (Nav) and inhibit the inactivation of the activated channels, thereby blocking neuronal transmission. Is active against mammals and binds with high affinity to rat brain synaptosomes. This chain is Alpha-mammal toxin Bot3, found in Buthus occitanus tunetanus (Common European scorpion).